We begin with the raw amino-acid sequence, 535 residues long: Succinate-semialdehyde dehydrogenase, mitochondrial (535 aa).

The transit peptide at 1 to 47 (MATCIWLRSCGARRLGSTFPGCRLRPRAGGLVPASGPAPGPAQLRCY) directs the protein to the mitochondrion. N6-acetyllysine; alternate is present on lysine 126. Lysine 126 is modified (N6-succinyllysine; alternate). Residues lysine 135 and lysine 184 each carry the N6-succinyllysine modification. 202-204 (TPW) contacts NAD(+). Arginine 213 contacts substrate. 228–231 (KPAE) serves as a coordination point for NAD(+). The residue at position 265 (lysine 265) is an N6-acetyllysine; alternate. N6-succinyllysine; alternate is present on lysine 265. NAD(+)-binding positions include 284–289 (GSTTTG) and glutamate 306. The active-site Proton acceptor is glutamate 306. Residue arginine 334 coordinates substrate. The active-site Nucleophile is cysteine 340. Cysteine 340 and cysteine 342 are joined by a disulfide. Lysine 365 bears the N6-acetyllysine mark. Lysine 402 is subject to N6-succinyllysine. Lysine 411 carries the N6-acetyllysine modification. 438–440 (ETF) contributes to the NAD(+) binding site. Serine 498 lines the substrate pocket. Serine 499 bears the Phosphoserine mark.

The protein belongs to the aldehyde dehydrogenase family. In terms of assembly, homotetramer. In terms of tissue distribution, brain, pancreas, heart, liver, skeletal muscle and kidney. Lower in placenta.

It localises to the mitochondrion. It carries out the reaction succinate semialdehyde + NAD(+) + H2O = succinate + NADH + 2 H(+). It participates in amino-acid degradation; 4-aminobutanoate degradation. With respect to regulation, redox-regulated. Inhibited under oxydizing conditions. Inhibited by hydrogen peroxide H(2)O(2). Catalyzes one step in the degradation of the inhibitory neurotransmitter gamma-aminobutyric acid (GABA). This chain is Succinate-semialdehyde dehydrogenase, mitochondrial, found in Homo sapiens (Human).